Here is a 204-residue protein sequence, read N- to C-terminus: Guanine-specific ADP-ribosyl transferase (204 aa).

Residues methionine 1–alanine 42 form the signal peptide. Cysteine 46 and cysteine 76 are oxidised to a cystine. Residues arginine 81–arginine 85 and lysine 98 each bind NADH. GDP contacts are provided by residues valine 111–asparagine 114, tryptophan 132–lysine 134, tryptophan 159, and glutamine 162. A PN (phosphate-nicotinamide) loop motif is present at residues tryptophan 132 to glycine 136. Cysteine 180 and cysteine 194 form a disulfide bridge.

The protein belongs to the pierisin ADP-ribosyltransferase family. In terms of assembly, monomer.

It localises to the secreted. It carries out the reaction guanosine + NAD(+) = N(2)-(ADP-D-ribosyl)-guanosine + nicotinamide + H(+). The enzyme catalyses a 2'-deoxyguanosine in DNA + NAD(+) = an N(2)-(ADP-L-ribosyl)-2'-deoxyguanosine in DNA + nicotinamide + H(+). The catalysed reaction is 2'-deoxyguanosine + NAD(+) = N(2)-(ADP-D-ribosyl)-2'-deoxyguanosine + nicotinamide + H(+). It catalyses the reaction GMP + NAD(+) = N(2)-(ADP-D-ribosyl)-GMP + nicotinamide + H(+). It carries out the reaction GTP + NAD(+) = N(2)-(ADP-D-ribosyl)-GTP + nicotinamide + H(+). The enzyme catalyses dGMP + NAD(+) = N(2)-(ADP-D-ribosyl)-dGMP + nicotinamide + H(+). The catalysed reaction is dGTP + NAD(+) = N(2)-(ADP-D-ribosyl)-dGTP + nicotinamide + H(+). It catalyses the reaction 3',5'-cyclic GMP + NAD(+) = N(2)-(ADP-D-ribosyl)-3',5'-cyclic GMP + nicotinamide + H(+). It carries out the reaction guanine + NAD(+) = N(2)-(ADP-D-ribosyl)-guanine + nicotinamide + H(+). The enzyme catalyses GDP + NAD(+) = N(2)-(ADP-D-ribosyl)-GDP + nicotinamide + H(+). Its activity is regulated as follows. Inhibited by NADH. Its function is as follows. ADP-ribosylates the N2 amino group of guanosine, deoxyguanosine, GMP, dGMP, cGMP, GTP and dGTP; oligo-guanosine, oligo-deoxyguanosine and tRNA are ADP-ribosylated less efficiently, while dsDNA is a very poor substrate. Also acts on GDP. The protein is Guanine-specific ADP-ribosyl transferase of Streptomyces coelicolor (strain ATCC BAA-471 / A3(2) / M145).